Consider the following 82-residue polypeptide: Small ribosomal subunit protein uS17 (82 aa).

Belongs to the universal ribosomal protein uS17 family. Part of the 30S ribosomal subunit.

One of the primary rRNA binding proteins, it binds specifically to the 5'-end of 16S ribosomal RNA. In Thermosynechococcus vestitus (strain NIES-2133 / IAM M-273 / BP-1), this protein is Small ribosomal subunit protein uS17.